The chain runs to 311 residues: tRNA-cytidine(32) 2-sulfurtransferase (311 aa).

Residues 47–52 carry the PP-loop motif motif; the sequence is SGGKDS. C122, C125, and C213 together coordinate [4Fe-4S] cluster.

This sequence belongs to the TtcA family. As to quaternary structure, homodimer. Requires Mg(2+) as cofactor. The cofactor is [4Fe-4S] cluster.

The protein resides in the cytoplasm. The enzyme catalyses cytidine(32) in tRNA + S-sulfanyl-L-cysteinyl-[cysteine desulfurase] + AH2 + ATP = 2-thiocytidine(32) in tRNA + L-cysteinyl-[cysteine desulfurase] + A + AMP + diphosphate + H(+). It functions in the pathway tRNA modification. In terms of biological role, catalyzes the ATP-dependent 2-thiolation of cytidine in position 32 of tRNA, to form 2-thiocytidine (s(2)C32). The sulfur atoms are provided by the cysteine/cysteine desulfurase (IscS) system. This is tRNA-cytidine(32) 2-sulfurtransferase from Salmonella arizonae (strain ATCC BAA-731 / CDC346-86 / RSK2980).